The chain runs to 227 residues: Cytochrome c oxidase subunit 2 (227 aa).

The Mitochondrial intermembrane segment spans residues 1-14; sequence MAYPLQLGLQDATS. Residues 15–45 form a helical membrane-spanning segment; that stretch reads PIMEELMNFHDHTLMIVFLISSLVLYIISLM. The Mitochondrial matrix segment spans residues 46–59; that stretch reads LTTKLTHTSTMDAQ. The helical transmembrane segment at 60–87 threads the bilayer; it reads EVETIWTILPAVILIMIALPSLRILYMM. Residues 88–227 are Mitochondrial intermembrane-facing; that stretch reads DEINNPVLTV…HFENWSASMI (140 aa). Cu cation-binding residues include His-161, Cys-196, Glu-198, Cys-200, His-204, and Met-207. Glu-198 provides a ligand contact to Mg(2+).

The protein belongs to the cytochrome c oxidase subunit 2 family. As to quaternary structure, component of the cytochrome c oxidase (complex IV, CIV), a multisubunit enzyme composed of 14 subunits. The complex is composed of a catalytic core of 3 subunits MT-CO1, MT-CO2 and MT-CO3, encoded in the mitochondrial DNA, and 11 supernumerary subunits COX4I, COX5A, COX5B, COX6A, COX6B, COX6C, COX7A, COX7B, COX7C, COX8 and NDUFA4, which are encoded in the nuclear genome. The complex exists as a monomer or a dimer and forms supercomplexes (SCs) in the inner mitochondrial membrane with NADH-ubiquinone oxidoreductase (complex I, CI) and ubiquinol-cytochrome c oxidoreductase (cytochrome b-c1 complex, complex III, CIII), resulting in different assemblies (supercomplex SCI(1)III(2)IV(1) and megacomplex MCI(2)III(2)IV(2)). Found in a complex with TMEM177, COA6, COX18, COX20, SCO1 and SCO2. Interacts with TMEM177 in a COX20-dependent manner. Interacts with COX20. Interacts with COX16. Cu cation is required as a cofactor.

It localises to the mitochondrion inner membrane. The catalysed reaction is 4 Fe(II)-[cytochrome c] + O2 + 8 H(+)(in) = 4 Fe(III)-[cytochrome c] + 2 H2O + 4 H(+)(out). Its function is as follows. Component of the cytochrome c oxidase, the last enzyme in the mitochondrial electron transport chain which drives oxidative phosphorylation. The respiratory chain contains 3 multisubunit complexes succinate dehydrogenase (complex II, CII), ubiquinol-cytochrome c oxidoreductase (cytochrome b-c1 complex, complex III, CIII) and cytochrome c oxidase (complex IV, CIV), that cooperate to transfer electrons derived from NADH and succinate to molecular oxygen, creating an electrochemical gradient over the inner membrane that drives transmembrane transport and the ATP synthase. Cytochrome c oxidase is the component of the respiratory chain that catalyzes the reduction of oxygen to water. Electrons originating from reduced cytochrome c in the intermembrane space (IMS) are transferred via the dinuclear copper A center (CU(A)) of subunit 2 and heme A of subunit 1 to the active site in subunit 1, a binuclear center (BNC) formed by heme A3 and copper B (CU(B)). The BNC reduces molecular oxygen to 2 water molecules using 4 electrons from cytochrome c in the IMS and 4 protons from the mitochondrial matrix. The polypeptide is Cytochrome c oxidase subunit 2 (MT-CO2) (Zelotomys hildegardeae (Hildegarde's broad-headed mouse)).